Reading from the N-terminus, the 246-residue chain is 1-(5-phosphoribosyl)-5-[(5-phosphoribosylamino)methylideneamino] imidazole-4-carboxamide isomerase (246 aa).

Asp8 serves as the catalytic Proton acceptor. Catalysis depends on Asp130, which acts as the Proton donor.

The protein belongs to the HisA/HisF family.

It localises to the cytoplasm. It carries out the reaction 1-(5-phospho-beta-D-ribosyl)-5-[(5-phospho-beta-D-ribosylamino)methylideneamino]imidazole-4-carboxamide = 5-[(5-phospho-1-deoxy-D-ribulos-1-ylimino)methylamino]-1-(5-phospho-beta-D-ribosyl)imidazole-4-carboxamide. It participates in amino-acid biosynthesis; L-histidine biosynthesis; L-histidine from 5-phospho-alpha-D-ribose 1-diphosphate: step 4/9. This chain is 1-(5-phosphoribosyl)-5-[(5-phosphoribosylamino)methylideneamino] imidazole-4-carboxamide isomerase, found in Shigella sonnei (strain Ss046).